Reading from the N-terminus, the 297-residue chain is 4,5-DOPA dioxygenase extradiol-like protein (297 aa).

Zn(2+) is bound by residues H30, H82, H205, and H263.

This sequence belongs to the DODA-type extradiol aromatic ring-opening dioxygenase family. Zn(2+) serves as cofactor.

It is found in the cytoplasm. Its subcellular location is the nucleus. May be involved in the metabolism of aromatic compounds. In Schizosaccharomyces pombe (strain 972 / ATCC 24843) (Fission yeast), this protein is 4,5-DOPA dioxygenase extradiol-like protein.